We begin with the raw amino-acid sequence, 173 residues long: uncharacterized protein (173 aa).

The signal sequence occupies residues methionine 1 to alanine 25.

This is an uncharacterized protein from Mycobacterium bovis (strain ATCC BAA-935 / AF2122/97).